The chain runs to 75 residues: RNA-binding protein KhpA (75 aa).

Positions 29–75 constitute a KH domain; that stretch reads KKVYEIVVNEEDVGQVIGKDGRTIKSLKILLSALMGDSKEITIKVVR.

This sequence belongs to the KhpA RNA-binding protein family. As to quaternary structure, forms a complex with KhpB.

The protein localises to the cytoplasm. Functionally, a probable RNA chaperone. Forms a complex with KhpB which binds to cellular RNA and controls its expression. Plays a role in peptidoglycan (PG) homeostasis and cell length regulation. This chain is RNA-binding protein KhpA, found in Thermotoga maritima (strain ATCC 43589 / DSM 3109 / JCM 10099 / NBRC 100826 / MSB8).